A 283-amino-acid polypeptide reads, in one-letter code: Protoheme IX farnesyltransferase (283 aa).

The next 9 membrane-spanning stretches (helical) occupy residues 6–26, 35–55, 85–105, 106–126, 131–151, 160–180, 207–227, 230–250, and 262–282; these read LLLTKPGIILGNLVTVMAGFL, FGLFFSTILGLAFIMASGCVF, AIVFGLALAIVGAIILYFYTN, LLTLVIAELGFIIYVFFYSIW, VYGTAIGSLAGAVPPLVGYCA, AFILFAMMVFWQMPHFFSIAI, ILLYIIIFTLTSSLLTFFHFT, LYLILTIGLGLTWLLMGLRGL, and MFRFSLVIISVLSLTIPFDLV.

Belongs to the UbiA prenyltransferase family. Protoheme IX farnesyltransferase subfamily.

It is found in the cell inner membrane. It carries out the reaction heme b + (2E,6E)-farnesyl diphosphate + H2O = Fe(II)-heme o + diphosphate. Its pathway is porphyrin-containing compound metabolism; heme O biosynthesis; heme O from protoheme: step 1/1. In terms of biological role, converts heme B (protoheme IX) to heme O by substitution of the vinyl group on carbon 2 of heme B porphyrin ring with a hydroxyethyl farnesyl side group. The sequence is that of Protoheme IX farnesyltransferase from Protochlamydia amoebophila (strain UWE25).